A 93-amino-acid polypeptide reads, in one-letter code: Parbolysin P5 (93 aa).

Disulfide bonds link Cys16-Cys37, Cys22-Cys33, and Cys47-Cys60.

It belongs to the worm cytolysin family. In terms of tissue distribution, localized within the skin and proboscis and are most readily isolated from body mucus secretions.

The protein resides in the secreted. Cytolysin that shows hemolytic activity (on bovine erythrocytes, HC(50)=5.75 mg/ml). This hemolytic activity is completely inhibited by small unilamelar vesicles composed of PC/PG, PC/PI and PC/PS in 1:1 molar ratios (with at least 100 mg/ml concentration). In Parborlasia corrugatus (Antarctic nemertean worm), this protein is Parbolysin P5.